A 245-amino-acid polypeptide reads, in one-letter code: Carbohydrate deacetylase (245 aa).

Mg(2+) contacts are provided by His-61 and His-122.

Belongs to the YdjC deacetylase family. It depends on Mg(2+) as a cofactor.

In terms of biological role, probably catalyzes the deacetylation of acetylated carbohydrates an important step in the degradation of oligosaccharides. The chain is Carbohydrate deacetylase (celC) from Geobacillus stearothermophilus (Bacillus stearothermophilus).